The sequence spans 482 residues: UDP-N-acetylmuramate--L-alanine ligase (482 aa).

The segment at 1–26 (MPQLPMTDSAPLPTPAPSSPAQPSAQ) is disordered. Residue 140–146 (GTHGKTT) participates in ATP binding.

The protein belongs to the MurCDEF family.

It localises to the cytoplasm. The catalysed reaction is UDP-N-acetyl-alpha-D-muramate + L-alanine + ATP = UDP-N-acetyl-alpha-D-muramoyl-L-alanine + ADP + phosphate + H(+). It functions in the pathway cell wall biogenesis; peptidoglycan biosynthesis. Its function is as follows. Cell wall formation. In Deinococcus radiodurans (strain ATCC 13939 / DSM 20539 / JCM 16871 / CCUG 27074 / LMG 4051 / NBRC 15346 / NCIMB 9279 / VKM B-1422 / R1), this protein is UDP-N-acetylmuramate--L-alanine ligase.